We begin with the raw amino-acid sequence, 389 residues long: GDP-fucose protein O-fucosyltransferase 1 (389 aa).

An N-terminal signal peptide occupies residues M1–A21. N24 is a glycosylation site (N-linked (GlcNAc...) asparagine). C35 and C37 are disulfide-bonded. R40–N43 contributes to the substrate binding site. C119 and C135 form a disulfide bridge. Residue H238 to R240 coordinates substrate. Intrachain disulfides connect C249/C281 and C266/C353. T356 to F357 contributes to the substrate binding site.

This sequence belongs to the glycosyltransferase 65 family. Monomer.

It localises to the endoplasmic reticulum. The enzyme catalyses L-seryl-[protein] + GDP-beta-L-fucose = 3-O-(alpha-L-fucosyl)-L-seryl-[protein] + GDP + H(+). It catalyses the reaction L-threonyl-[protein] + GDP-beta-L-fucose = 3-O-(alpha-L-fucosyl)-L-threonyl-[protein] + GDP + H(+). It functions in the pathway protein modification; protein glycosylation. Its function is as follows. Catalyzes the reaction that attaches fucose through an O-glycosidic linkage to a conserved serine or threonine residue found in the consensus sequence C2-X(4,5)-[S/T]-C3 of EGF domains, where C2 and C3 are the second and third conserved cysteines. Specifically uses GDP-fucose as donor substrate and proper disulfide pairing of the substrate EGF domains is required for fucose transfer. This is GDP-fucose protein O-fucosyltransferase 1 from Caenorhabditis elegans.